We begin with the raw amino-acid sequence, 95 residues long: Progonadoliberin-1 (95 aa).

The N-terminal stretch at 1 to 25 is a signal peptide; sequence MAPQTSNLWILLLLVVVMMMSQGCC. The residue at position 26 (Gln-26) is a Pyrrolidone carboxylic acid. Gly-35 is subject to Glycine amide.

Belongs to the GnRH family.

The protein localises to the secreted. In terms of biological role, stimulates the secretion of gonadotropins. The protein is Progonadoliberin-1 (gnrh1) of Sparus aurata (Gilthead sea bream).